Reading from the N-terminus, the 485-residue chain is Glutamyl-tRNA(Gln) amidotransferase subunit A (485 aa).

Active-site charge relay system residues include Lys79 and Ser154. Residue Ser178 is the Acyl-ester intermediate of the active site.

The protein belongs to the amidase family. GatA subfamily. As to quaternary structure, heterotrimer of A, B and C subunits.

The enzyme catalyses L-glutamyl-tRNA(Gln) + L-glutamine + ATP + H2O = L-glutaminyl-tRNA(Gln) + L-glutamate + ADP + phosphate + H(+). Functionally, allows the formation of correctly charged Gln-tRNA(Gln) through the transamidation of misacylated Glu-tRNA(Gln) in organisms which lack glutaminyl-tRNA synthetase. The reaction takes place in the presence of glutamine and ATP through an activated gamma-phospho-Glu-tRNA(Gln). The protein is Glutamyl-tRNA(Gln) amidotransferase subunit A of Clostridium botulinum (strain Eklund 17B / Type B).